The sequence spans 94 residues: Conotoxin Im026 (94 aa).

An N-terminal signal peptide occupies residues 1-24 (MRLTTMHSVILMLLLVFAFDNVDG). The propeptide occupies 25-59 (DEPGQTARDVDNRNFMSILRSEGKPVHFLRAIKKR).

In terms of processing, contains 4 disulfide bonds. In terms of tissue distribution, expressed by the venom duct.

It localises to the secreted. Its function is as follows. Probable neurotoxin. The protein is Conotoxin Im026 of Conus imperialis (Imperial cone).